We begin with the raw amino-acid sequence, 351 residues long: Nicotinate-nucleotide--dimethylbenzimidazole phosphoribosyltransferase (351 aa).

The Proton acceptor role is filled by glutamate 315.

The protein belongs to the CobT family.

It catalyses the reaction 5,6-dimethylbenzimidazole + nicotinate beta-D-ribonucleotide = alpha-ribazole 5'-phosphate + nicotinate + H(+). The protein operates within nucleoside biosynthesis; alpha-ribazole biosynthesis; alpha-ribazole from 5,6-dimethylbenzimidazole: step 1/2. Catalyzes the synthesis of alpha-ribazole-5'-phosphate from nicotinate mononucleotide (NAMN) and 5,6-dimethylbenzimidazole (DMB). In Acetivibrio thermocellus (strain ATCC 27405 / DSM 1237 / JCM 9322 / NBRC 103400 / NCIMB 10682 / NRRL B-4536 / VPI 7372) (Clostridium thermocellum), this protein is Nicotinate-nucleotide--dimethylbenzimidazole phosphoribosyltransferase.